Consider the following 220-residue polypeptide: Phosphoenolpyruvate guanylyltransferase (220 aa).

Phosphoenolpyruvate is bound by residues T154, G169, and S172.

This sequence belongs to the CofC family.

It catalyses the reaction phosphoenolpyruvate + GTP + H(+) = enolpyruvoyl-2-diphospho-5'-guanosine + diphosphate. Its pathway is cofactor biosynthesis; coenzyme F420 biosynthesis. Its function is as follows. Guanylyltransferase that catalyzes the activation of phosphoenolpyruvate (PEP) as enolpyruvoyl-2-diphospho-5'-guanosine, via the condensation of PEP with GTP. It is involved in the biosynthesis of coenzyme F420, a hydride carrier cofactor. The polypeptide is Phosphoenolpyruvate guanylyltransferase (Mycolicibacterium paratuberculosis (strain ATCC BAA-968 / K-10) (Mycobacterium paratuberculosis)).